We begin with the raw amino-acid sequence, 200 residues long: Large ribosomal subunit protein uL4 (200 aa).

The disordered stretch occupies residues 42 to 65; that stretch reads TRAQKTRSEVSGGGAKPWRQKGTG.

The protein belongs to the universal ribosomal protein uL4 family. As to quaternary structure, part of the 50S ribosomal subunit.

In terms of biological role, one of the primary rRNA binding proteins, this protein initially binds near the 5'-end of the 23S rRNA. It is important during the early stages of 50S assembly. It makes multiple contacts with different domains of the 23S rRNA in the assembled 50S subunit and ribosome. Forms part of the polypeptide exit tunnel. The chain is Large ribosomal subunit protein uL4 from Vibrio parahaemolyticus serotype O3:K6 (strain RIMD 2210633).